The following is a 284-amino-acid chain: Probable tRNA-splicing endonuclease subunit sen34 (284 aa).

Residues Y206, H214, and K245 contribute to the active site.

The protein belongs to the tRNA-intron endonuclease family. As to quaternary structure, heterotetramer composed of sen2, sen15, sen34 and sen54. Interacts directly with sen15.

It carries out the reaction pretRNA = a 3'-half-tRNA molecule with a 5'-OH end + a 5'-half-tRNA molecule with a 2',3'-cyclic phosphate end + an intron with a 2',3'-cyclic phosphate and a 5'-hydroxyl terminus.. Constitutes one of the two catalytic subunit of the tRNA-splicing endonuclease complex, a complex responsible for identification and cleavage of the splice sites in pre-tRNA. It cleaves pre-tRNA at the 5'- and 3'-splice sites to release the intron. The products are an intron and two tRNA half-molecules bearing 2',3'-cyclic phosphate and 5'-OH termini. There are no conserved sequences at the splice sites, but the intron is invariably located at the same site in the gene, placing the splice sites an invariant distance from the constant structural features of the tRNA body. It probably carries the active site for 3'-splice site cleavage. The polypeptide is Probable tRNA-splicing endonuclease subunit sen34 (sen34) (Schizosaccharomyces pombe (strain 972 / ATCC 24843) (Fission yeast)).